The sequence spans 259 residues: Dihydroorotate dehydrogenase B (NAD(+)), electron transfer subunit (259 aa).

The region spanning 2–102 (MQKQNMIVVN…LGPLGHGFPV (101 aa)) is the FAD-binding FR-type domain. Residues 53–56 (RPIS), 70–72 (LYR), and 77–78 (GT) each bind FAD. [2Fe-2S] cluster is bound by residues Cys-221, Cys-226, Cys-229, and Cys-246.

It belongs to the PyrK family. In terms of assembly, heterotetramer of 2 PyrK and 2 PyrD type B subunits. [2Fe-2S] cluster serves as cofactor. The cofactor is FAD.

Its pathway is pyrimidine metabolism; UMP biosynthesis via de novo pathway; orotate from (S)-dihydroorotate (NAD(+) route): step 1/1. In terms of biological role, responsible for channeling the electrons from the oxidation of dihydroorotate from the FMN redox center in the PyrD type B subunit to the ultimate electron acceptor NAD(+). The protein is Dihydroorotate dehydrogenase B (NAD(+)), electron transfer subunit of Bacillus cereus (strain ATCC 14579 / DSM 31 / CCUG 7414 / JCM 2152 / NBRC 15305 / NCIMB 9373 / NCTC 2599 / NRRL B-3711).